A 427-amino-acid polypeptide reads, in one-letter code: Serine/threonine-protein kinase AFC2 (427 aa).

Residues 98–423 (YKIYSKMGEG…AREALRHPFF (326 aa)) enclose the Protein kinase domain. ATP is bound by residues 104-112 (MGEGTFGQV) and K127. The active-site Proton acceptor is the D223.

This sequence belongs to the protein kinase superfamily. CMGC Ser/Thr protein kinase family. Lammer subfamily.

It carries out the reaction L-seryl-[protein] + ATP = O-phospho-L-seryl-[protein] + ADP + H(+). It catalyses the reaction L-threonyl-[protein] + ATP = O-phospho-L-threonyl-[protein] + ADP + H(+). The enzyme catalyses L-tyrosyl-[protein] + ATP = O-phospho-L-tyrosyl-[protein] + ADP + H(+). This Arabidopsis thaliana (Mouse-ear cress) protein is Serine/threonine-protein kinase AFC2 (AFC2).